Here is a 314-residue protein sequence, read N- to C-terminus: Ribonuclease Z (314 aa).

7 residues coordinate Zn(2+): His62, His64, Asp66, His67, His144, Asp215, and His273. Asp66 (proton acceptor) is an active-site residue.

It belongs to the RNase Z family. As to quaternary structure, homodimer. It depends on Zn(2+) as a cofactor.

It catalyses the reaction Endonucleolytic cleavage of RNA, removing extra 3' nucleotides from tRNA precursor, generating 3' termini of tRNAs. A 3'-hydroxy group is left at the tRNA terminus and a 5'-phosphoryl group is left at the trailer molecule.. Zinc phosphodiesterase, which displays some tRNA 3'-processing endonuclease activity. Probably involved in tRNA maturation, by removing a 3'-trailer from precursor tRNA. This Prochlorococcus marinus (strain NATL2A) protein is Ribonuclease Z.